Consider the following 351-residue polypeptide: uncharacterized protein (351 aa).

5 residues coordinate Mn(2+): Asp215, Asp226, His290, Glu319, and Glu333.

This sequence belongs to the peptidase M24B family. Requires Mn(2+) as cofactor.

This is an uncharacterized protein from Staphylococcus aureus (strain bovine RF122 / ET3-1).